The sequence spans 179 residues: Large ribosomal subunit protein uL5 (179 aa).

Belongs to the universal ribosomal protein uL5 family. Part of the 50S ribosomal subunit; part of the 5S rRNA/L5/L18/L25 subcomplex. Contacts the 5S rRNA and the P site tRNA. Forms a bridge to the 30S subunit in the 70S ribosome.

This is one of the proteins that bind and probably mediate the attachment of the 5S RNA into the large ribosomal subunit, where it forms part of the central protuberance. In the 70S ribosome it contacts protein S13 of the 30S subunit (bridge B1b), connecting the 2 subunits; this bridge is implicated in subunit movement. Contacts the P site tRNA; the 5S rRNA and some of its associated proteins might help stabilize positioning of ribosome-bound tRNAs. The polypeptide is Large ribosomal subunit protein uL5 (Salmonella arizonae (strain ATCC BAA-731 / CDC346-86 / RSK2980)).